The sequence spans 194 residues: Ribonuclease HII (194 aa).

Positions I3–L193 constitute an RNase H type-2 domain. Positions 9, 10, and 101 each coordinate a divalent metal cation.

The protein belongs to the RNase HII family. It depends on Mn(2+) as a cofactor. Requires Mg(2+) as cofactor.

The protein localises to the cytoplasm. It carries out the reaction Endonucleolytic cleavage to 5'-phosphomonoester.. Its function is as follows. Endonuclease that specifically degrades the RNA of RNA-DNA hybrids. This is Ribonuclease HII (rnhB) from Neisseria meningitidis serogroup B (strain ATCC BAA-335 / MC58).